The following is a 154-amino-acid chain: D-aminoacyl-tRNA deacylase (154 aa).

Residues 137–138 (GP) carry the Gly-cisPro motif, important for rejection of L-amino acids motif.

It belongs to the DTD family. In terms of assembly, homodimer.

The protein resides in the cytoplasm. The catalysed reaction is glycyl-tRNA(Ala) + H2O = tRNA(Ala) + glycine + H(+). It carries out the reaction a D-aminoacyl-tRNA + H2O = a tRNA + a D-alpha-amino acid + H(+). An aminoacyl-tRNA editing enzyme that deacylates mischarged D-aminoacyl-tRNAs. Also deacylates mischarged glycyl-tRNA(Ala), protecting cells against glycine mischarging by AlaRS. Acts via tRNA-based rather than protein-based catalysis; rejects L-amino acids rather than detecting D-amino acids in the active site. By recycling D-aminoacyl-tRNA to D-amino acids and free tRNA molecules, this enzyme counteracts the toxicity associated with the formation of D-aminoacyl-tRNA entities in vivo and helps enforce protein L-homochirality. The protein is D-aminoacyl-tRNA deacylase of Thermomicrobium roseum (strain ATCC 27502 / DSM 5159 / P-2).